We begin with the raw amino-acid sequence, 367 residues long: MVKTRAILEEYKTYVPGRSKKEIAEEYGVAEESIIKLGSNENPWGPSPKAKQAIIDSIDEINRYPESNHEYIKEQIAKYANVTKDQVIIGGDGADELFEVLAKTVIDEGDEFIVHQPTYTYYEYTFKQSNAKAVYATWNIEENKLDVDSVLNNITDKTKVIFLCTPNNPTGGLIPQEDIVRIIEATDALVVIDEAYWEFSEVNNVNLLKKYNNIFIIRTFSKVMGLAGLRIGYGLSNPDFIEKMSRIKPVFSVTVPSQKAVIATLNDEEFIKESTEKAITEREYLYESVNSIDNIHIYKSKSNYLLMDVRKTGYTAAELTSKLMSRGVIVRDCTSFVGLDEYYIRISVETHPKNEKFIEILKEIVEN.

Position 222 is an N6-(pyridoxal phosphate)lysine (K222).

Belongs to the class-II pyridoxal-phosphate-dependent aminotransferase family. Histidinol-phosphate aminotransferase subfamily. It depends on pyridoxal 5'-phosphate as a cofactor.

It catalyses the reaction L-histidinol phosphate + 2-oxoglutarate = 3-(imidazol-4-yl)-2-oxopropyl phosphate + L-glutamate. Its pathway is amino-acid biosynthesis; L-histidine biosynthesis; L-histidine from 5-phospho-alpha-D-ribose 1-diphosphate: step 7/9. The polypeptide is Histidinol-phosphate aminotransferase (Methanosphaera stadtmanae (strain ATCC 43021 / DSM 3091 / JCM 11832 / MCB-3)).